Consider the following 389-residue polypeptide: Geranylgeranyl pyrophosphate synthase A (389 aa).

Residues lysine 99, arginine 102, and histidine 131 each contribute to the isopentenyl diphosphate site. Mg(2+) is bound by residues aspartate 138 and aspartate 142. Arginine 147 provides a ligand contact to dimethylallyl diphosphate. Residue arginine 148 participates in isopentenyl diphosphate binding.

It belongs to the FPP/GGPP synthase family. The cofactor is Mg(2+).

It localises to the cytoplasm. The enzyme catalyses isopentenyl diphosphate + (2E)-geranyl diphosphate = (2E,6E)-farnesyl diphosphate + diphosphate. The catalysed reaction is isopentenyl diphosphate + (2E,6E)-farnesyl diphosphate = (2E,6E,10E)-geranylgeranyl diphosphate + diphosphate. Its pathway is isoprenoid biosynthesis; farnesyl diphosphate biosynthesis; farnesyl diphosphate from geranyl diphosphate and isopentenyl diphosphate: step 1/1. It functions in the pathway isoprenoid biosynthesis; geranylgeranyl diphosphate biosynthesis; geranylgeranyl diphosphate from farnesyl diphosphate and isopentenyl diphosphate: step 1/1. Functionally, catalyzes the trans-addition of the 2 molecules of isopentenyl diphosphate (IPP) onto geranyl diphosphate (GDP) to form geranylgeranyl pyrophosphate (GGDP). Does not catalyze the conversion of dimethylallyl diphosphate (DMAPP). The sequence is that of Geranylgeranyl pyrophosphate synthase A (GGS-A) from Phomopsis amygdali (Fusicoccum amygdali).